The following is a 388-amino-acid chain: Nitric oxide reductase FlRd-NAD(+) reductase (388 aa).

It belongs to the FAD-dependent oxidoreductase family. FAD serves as cofactor.

The protein localises to the cytoplasm. The enzyme catalyses 2 reduced [nitric oxide reductase rubredoxin domain] + NAD(+) + H(+) = 2 oxidized [nitric oxide reductase rubredoxin domain] + NADH. It participates in nitrogen metabolism; nitric oxide reduction. One of at least two accessory proteins for anaerobic nitric oxide (NO) reductase. Reduces the rubredoxin moiety of NO reductase. This Aeromonas hydrophila subsp. hydrophila (strain ATCC 7966 / DSM 30187 / BCRC 13018 / CCUG 14551 / JCM 1027 / KCTC 2358 / NCIMB 9240 / NCTC 8049) protein is Nitric oxide reductase FlRd-NAD(+) reductase.